A 114-amino-acid polypeptide reads, in one-letter code: UPF0145 protein STK_10800 (114 aa).

This sequence belongs to the UPF0145 family.

The sequence is that of UPF0145 protein STK_10800 from Sulfurisphaera tokodaii (strain DSM 16993 / JCM 10545 / NBRC 100140 / 7) (Sulfolobus tokodaii).